The chain runs to 328 residues: MKLFWVDLRPWRKDLATTAIESGADALVVEDAERVRKLGRVTAIAENGDLVPGKDVFEIEIVDKESEEEALRLSREGLVIVRTGDWTVIPLENLVAQSDRIVAAVGNADEAKVALTVLERGTAGILLATDDPAEVRRVAKTIAGAGASVPLVPFEVTRIVPVGMGDRVCVDTCSILADGEGMLVGNTSSAFLMVHPETLENPYVAPRPFRVNAGAVHAYILLPGGKTAYLADLAVGDRVLVAEHTGPTHDAVVGRVKIERRPLLLVEAKAGDATVSLVLQNAETIRLVREDGTAVSVAALTVGDRVLGSVAEGGRHFGVAVKETILEK.

Belongs to the archaeal-type DHQ synthase family.

The catalysed reaction is 2-amino-2,3,7-trideoxy-D-lyxo-hept-6-ulosonate + NAD(+) + H2O = 3-dehydroquinate + NH4(+) + NADH + H(+). Its function is as follows. Catalyzes the oxidative deamination and cyclization of 2-amino-3,7-dideoxy-D-threo-hept-6-ulosonic acid (ADH) to yield 3-dehydroquinate (DHQ), which is fed into the canonical shikimic pathway of aromatic amino acid biosynthesis. The protein is 3-dehydroquinate synthase of Methanoculleus marisnigri (strain ATCC 35101 / DSM 1498 / JR1).